Reading from the N-terminus, the 745-residue chain is Elongation factor G, mitochondrial (745 aa).

The tr-type G domain maps to 40–317 (ERIRNIGISA…AVLDYLPNPG (278 aa)). Residues 49 to 56 (AHIDSGKT), 116 to 120 (DTPGH), and 170 to 173 (NKLD) each bind GTP.

It belongs to the TRAFAC class translation factor GTPase superfamily. Classic translation factor GTPase family. EF-G/EF-2 subfamily.

It is found in the mitochondrion. Its pathway is protein biosynthesis; polypeptide chain elongation. Functionally, mitochondrial GTPase that catalyzes the GTP-dependent ribosomal translocation step during translation elongation. During this step, the ribosome changes from the pre-translocational (PRE) to the post-translocational (POST) state as the newly formed A-site-bound peptidyl-tRNA and P-site-bound deacylated tRNA move to the P and E sites, respectively. Catalyzes the coordinated movement of the two tRNA molecules, the mRNA and conformational changes in the ribosome. Essential during development as it acts as a retrograde signal from mitochondria to the nucleus to slow down cell proliferation if mitochondrial energy output is low. In Drosophila melanogaster (Fruit fly), this protein is Elongation factor G, mitochondrial.